The primary structure comprises 503 residues: Envelope glycoprotein p57 (503 aa).

The N-terminal stretch at 1–22 is a signal peptide; that stretch reads MQLSMSFLIGFGTLVLALSART. Topologically, residues 23–467 are extracellular; that stretch reads FDLQGLSCNT…FLNPLGWLRD (445 aa). N-linked (GlcNAc...) asparagine; by host glycans are attached at residues Asn-63, Asn-109, Asn-139, Asn-192, Asn-196, Asn-202, Asn-221, Asn-230, and Asn-235. The interval 274-315 is fusion peptide; the sequence is ILQSLLLGVFGTGIASASQFLRGWLNHPDIIGYIVNGVGVVW. Asn-321, Asn-328, Asn-388, and Asn-438 each carry an N-linked (GlcNAc...) asparagine; by host glycan. Residues 468 to 488 traverse the membrane as a helical segment; sequence LLAWAAWLGGVLYLISLCVSL. Residues 489–503 lie on the Cytoplasmic side of the membrane; the sequence is PASFARRRRLGRWQE.

Post-translationally, glycosated; Stabilizes it. In terms of processing, a portion of p57 is cleaved into p27 and p29. p27 and p29 are called gp43 when glycosylated, as they seem to have the same molecular weight.

The protein resides in the host endoplasmic reticulum membrane. Its subcellular location is the virion. It is found in the host cell membrane. In terms of biological role, unprocessed envelope protein p57 is thought to be involved in attachment of the virus to its cell surface receptor. This attachment induces virion internalization predominantly through clathrin-dependent endocytosis. Envelope protein p27 and p29 presumably linked by disulfide bond are the viral type II fusion protein, involved in pH-dependent fusion within early endosomes after internalization of the virion by endocytosis. The sequence is that of Envelope glycoprotein p57 (G) from Borna disease virus 1 (BoDV-1).